The primary structure comprises 159 residues: UPF0336 protein ML1910 (159 aa).

Belongs to the UPF0336 family.

This Mycobacterium leprae (strain TN) protein is UPF0336 protein ML1910.